Here is a 447-residue protein sequence, read N- to C-terminus: uncharacterized protein (447 aa).

This sequence belongs to the class-II fumarase/aspartase family.

It is found in the cytoplasm. The protein localises to the nucleus. This is an uncharacterized protein from Schizosaccharomyces pombe (strain 972 / ATCC 24843) (Fission yeast).